Reading from the N-terminus, the 875-residue chain is Translation initiation factor IF-2 (875 aa).

3 disordered regions span residues 1–20, 47–102, and 126–246; these read MSDS…LKTA, LMGR…LREA, and EEER…DRRG. The segment covering 54 to 66 has biased composition (low complexity); the sequence is AAPTAAPAAAATP. Residues 67–85 show a composition bias toward pro residues; that stretch reads APTPVAPPPPPPPPPPPPS. Composition is skewed to basic and acidic residues over residues 88–102 and 126–140; these read RETR…LREA and EEER…RAEA. 2 stretches are compositionally biased toward low complexity: residues 141-195 and 202-221; these read EAAA…PAAP and PAAP…PAAP. Over residues 223–246 the composition is skewed to basic and acidic residues; that stretch reads KRPELAAKKPAHPQRDRKTEDRRG. The tr-type G domain occupies 374 to 544; that stretch reads ARPPVVTIMG…LLQAELLELK (171 aa). The interval 383-390 is G1; it reads GHVDHGKT. GTP is bound at residue 383-390; it reads GHVDHGKT. The tract at residues 408-412 is G2; sequence GITQH. The G3 stretch occupies residues 430-433; the sequence is DTPG. GTP is bound by residues 430 to 434 and 484 to 487; these read DTPGH and TKAD. Residues 484-487 are G4; the sequence is TKAD. The G5 stretch occupies residues 520–522; sequence SAK.

The protein belongs to the TRAFAC class translation factor GTPase superfamily. Classic translation factor GTPase family. IF-2 subfamily.

Its subcellular location is the cytoplasm. One of the essential components for the initiation of protein synthesis. Protects formylmethionyl-tRNA from spontaneous hydrolysis and promotes its binding to the 30S ribosomal subunits. Also involved in the hydrolysis of GTP during the formation of the 70S ribosomal complex. This is Translation initiation factor IF-2 from Novosphingobium aromaticivorans (strain ATCC 700278 / DSM 12444 / CCUG 56034 / CIP 105152 / NBRC 16084 / F199).